A 233-amino-acid polypeptide reads, in one-letter code: Lipoprotein-releasing system ATP-binding protein LolD (233 aa).

The ABC transporter domain maps to 6-233; the sequence is LQCDNLCKRY…TAELSLMGAE (228 aa). 42–49 serves as a coordination point for ATP; it reads GSSGSGKS.

The protein belongs to the ABC transporter superfamily. Lipoprotein translocase (TC 3.A.1.125) family. In terms of assembly, the complex is composed of two ATP-binding proteins (LolD) and two transmembrane proteins (LolC and LolE).

It is found in the cell inner membrane. Functionally, part of the ABC transporter complex LolCDE involved in the translocation of mature outer membrane-directed lipoproteins, from the inner membrane to the periplasmic chaperone, LolA. Responsible for the formation of the LolA-lipoprotein complex in an ATP-dependent manner. In Shigella dysenteriae serotype 1 (strain Sd197), this protein is Lipoprotein-releasing system ATP-binding protein LolD.